Reading from the N-terminus, the 157-residue chain is Small ribosomal subunit protein bS16 (157 aa).

Residues 114–157 (NEGPTAEAITEKKKKAKEEAAAKAAAEAEAAAKAEEAPAEEAAE) are disordered.

The protein belongs to the bacterial ribosomal protein bS16 family.

In Corynebacterium diphtheriae (strain ATCC 700971 / NCTC 13129 / Biotype gravis), this protein is Small ribosomal subunit protein bS16.